Reading from the N-terminus, the 460-residue chain is Photosystem II CP43 reaction center protein (460 aa).

The Cytoplasmic portion of the chain corresponds to 1 to 35; the sequence is MVTLSNTSMVGGRDLPSTGFAWWSGNARLINLSGK. The helical transmembrane segment at 36–58 threads the bilayer; it reads LLGAHVAHAGLIVFWAGAMTLFE. The Lumenal, thylakoid portion of the chain corresponds to 59–98; that stretch reads VAHFIPEKPMYEQGLILLPHIATLGWGVGPAGEVTDIFPF. The chain crosses the membrane as a helical span at residues 99 to 121; sequence FVVGVLHLISSAVLGLGGIYHAL. The Cytoplasmic portion of the chain corresponds to 122–142; it reads RGPEVLEEYSSFFGYDWKDKN. A helical transmembrane segment spans residues 143-165; that stretch reads QMTNIIGYHLILLGCGALLLVFK. The Lumenal, thylakoid segment spans residues 166–220; that stretch reads AMFFGGVYDTWAPGGGDVRVITNPTLNPAIIFGYLLKAPFGGEGWIISVNNMEDI. A helical transmembrane segment spans residues 221 to 240; that stretch reads IGGHIWIGLICISGGIWHIL. Topologically, residues 241-255 are cytoplasmic; it reads TKPFGWARRALIWSG. A helical transmembrane segment spans residues 256–276; it reads EAYLSYSLGALSLMGFIASVF. The Lumenal, thylakoid portion of the chain corresponds to 277-411; it reads VWFNNTAYPS…NSFNYVSPRA (135 aa). [CaMn4O5] cluster is bound by residues glutamate 341 and arginine 344. A helical transmembrane segment spans residues 412–436; that stretch reads WLATSHFVLGFFFLVGHLWHAGRAR. The Cytoplasmic segment spans residues 437-460; that stretch reads AAAAGFEKGIDRETEPTLFMPDLD.

The protein belongs to the PsbB/PsbC family. PsbC subfamily. PSII is composed of 1 copy each of membrane proteins PsbA, PsbB, PsbC, PsbD, PsbE, PsbF, PsbH, PsbI, PsbJ, PsbK, PsbL, PsbM, PsbT, PsbX, PsbY, PsbZ, Psb30/Ycf12, peripheral proteins PsbO, CyanoQ (PsbQ), PsbU, PsbV and a large number of cofactors. It forms dimeric complexes. Requires Binds multiple chlorophylls and provides some of the ligands for the Ca-4Mn-5O cluster of the oxygen-evolving complex. It may also provide a ligand for a Cl- that is required for oxygen evolution. PSII binds additional chlorophylls, carotenoids and specific lipids. as cofactor.

Its subcellular location is the cellular thylakoid membrane. In terms of biological role, one of the components of the core complex of photosystem II (PSII). PSII binds chlorophyll and helps catalyze the primary light-induced photochemical processes of PSII. PSII is a light-driven water:plastoquinone oxidoreductase, using light energy to abstract electrons from H(2)O, generating O(2) and a proton gradient subsequently used for ATP formation. Required for correct assembly of PSII. This is Photosystem II CP43 reaction center protein from Synechocystis sp. (strain ATCC 27184 / PCC 6803 / Kazusa).